Here is a 156-residue protein sequence, read N- to C-terminus: 6,7-dimethyl-8-ribityllumazine synthase (156 aa).

Residues phenylalanine 22, 57–59, and 81–83 contribute to the 5-amino-6-(D-ribitylamino)uracil site; these read AYE and TVI. 86-87 lines the (2S)-2-hydroxy-3-oxobutyl phosphate pocket; the sequence is GT. The Proton donor role is filled by histidine 89. Phenylalanine 114 is a 5-amino-6-(D-ribitylamino)uracil binding site. Arginine 128 lines the (2S)-2-hydroxy-3-oxobutyl phosphate pocket.

The protein belongs to the DMRL synthase family. As to quaternary structure, forms an icosahedral capsid composed of 60 subunits, arranged as a dodecamer of pentamers.

The catalysed reaction is (2S)-2-hydroxy-3-oxobutyl phosphate + 5-amino-6-(D-ribitylamino)uracil = 6,7-dimethyl-8-(1-D-ribityl)lumazine + phosphate + 2 H2O + H(+). It functions in the pathway cofactor biosynthesis; riboflavin biosynthesis; riboflavin from 2-hydroxy-3-oxobutyl phosphate and 5-amino-6-(D-ribitylamino)uracil: step 1/2. Functionally, catalyzes the formation of 6,7-dimethyl-8-ribityllumazine by condensation of 5-amino-6-(D-ribitylamino)uracil with 3,4-dihydroxy-2-butanone 4-phosphate. This is the penultimate step in the biosynthesis of riboflavin. This is 6,7-dimethyl-8-ribityllumazine synthase from Salmonella agona (strain SL483).